A 305-amino-acid chain; its full sequence is 2-pyrone-4,6-dicarbaxylate hydrolase (305 aa).

Substrate-binding positions include 32–34 (HCH), Y50, T78, R125, R131, Y158, and H182. Catalysis depends on D258, which acts as the Proton acceptor. N263 lines the substrate pocket.

The protein belongs to the metallo-dependent hydrolases superfamily. PDC hydrolase family.

The enzyme catalyses 2-oxo-2H-pyran-4,6-dicarboxylate + H2O = (1E)-4-oxobut-1-ene-1,2,4-tricarboxylate + H(+). With respect to regulation, strongly inhibited by 1 mM Zn(2+), Cu(2+), Mn(2+) and Co(2+) ions. Also inhibited by 5,5'-dithiobis(2-nitrobenzoic acid) (Ellman reagent) in vitro. Involved in the degradation of aromatic compounds via the protocatechuate 4,5-cleavage pathway. Catalyzes the hydrolysis of 2-pyrone-4,6-dicarboxylate (PDC) to oxalomesaconate (OMA). Also catalyzes the reverse reaction. This is 2-pyrone-4,6-dicarbaxylate hydrolase from Comamonas testosteroni (Pseudomonas testosteroni).